The sequence spans 447 residues: Dimethylsulfoniopropionate lyase DddP (447 aa).

The segment at 1–26 is disordered; the sequence is MNRHFNATRKIDPSRGATLGDGSPND. A divalent metal cation contacts are provided by Asp-295, Asp-297, Asp-307, His-371, Glu-406, and Glu-421.

It belongs to the peptidase M24B family. In terms of assembly, homodimer. Requires a divalent metal cation as cofactor.

The enzyme catalyses S,S-dimethyl-beta-propiothetin = acrylate + dimethyl sulfide + H(+). Functionally, able to cleave dimethylsulfoniopropionate (DMSP), releasing dimethyl sulfide (DMS). DMS is the principal form by which sulfur is transported from oceans to the atmosphere. The real activity of the protein is however subject to debate and it is unclear whether it constitutes a real dimethylsulfoniopropionate lyase in vivo: the low activity with DMSP as substrate suggests that DMSP is not its native substrate. The sequence is that of Dimethylsulfoniopropionate lyase DddP from Roseobacter denitrificans (strain ATCC 33942 / OCh 114) (Erythrobacter sp. (strain OCh 114)).